We begin with the raw amino-acid sequence, 284 residues long: MLIIETLPLLRQQIRRWRQEGKRIALVPTMGNLHEGHMTLVDEAKTRADVVVVTIFVNPLQFERPDDLAHYPRTLQEDCEKLTRHGADLVFAPAAADIYPAGLEKQTYVDVPALSTILEGASRPGHFRGVSTIVSKLFNLIQPDVACFGEKDYQQLALIRKMVADMGYDINIVGVPTVRAKDGLALSSRNGYLTEEERQIAPQLSKIMWALAEKMALGERQIDALLEEAAAQLLRVGFTPDELFIRDAETLQPLTVDSQQAVILMAAWLGKARLIDNQLVDLRH.

Methionine 30 to histidine 37 is an ATP binding site. Histidine 37 acts as the Proton donor in catalysis. Glutamine 61 is a (R)-pantoate binding site. Position 61 (glutamine 61) interacts with beta-alanine. Glycine 149 to aspartate 152 contributes to the ATP binding site. Glutamine 155 serves as a coordination point for (R)-pantoate. Residues valine 178 and leucine 186–arginine 189 contribute to the ATP site.

This sequence belongs to the pantothenate synthetase family. As to quaternary structure, homodimer.

Its subcellular location is the cytoplasm. The enzyme catalyses (R)-pantoate + beta-alanine + ATP = (R)-pantothenate + AMP + diphosphate + H(+). It participates in cofactor biosynthesis; (R)-pantothenate biosynthesis; (R)-pantothenate from (R)-pantoate and beta-alanine: step 1/1. Its function is as follows. Catalyzes the condensation of pantoate with beta-alanine in an ATP-dependent reaction via a pantoyl-adenylate intermediate. The sequence is that of Pantothenate synthetase from Yersinia pestis bv. Antiqua (strain Antiqua).